A 78-amino-acid polypeptide reads, in one-letter code: Major outer membrane lipoprotein Lpp (78 aa).

The signal sequence occupies residues 1–20; that stretch reads MNRTKLVLGAVILASTMLAG. The N-palmitoyl cysteine moiety is linked to residue C21. The S-diacylglycerol cysteine moiety is linked to residue C21. 2 consecutive repeats follow at residues 24 to 34 and 38 to 48; these read NAKIDQLSSDV and NAKVDQLSNDV. Residues 27 to 75 adopt a coiled-coil conformation; that stretch reads IDQLSSDVQTLNAKVDQLSNDVNAVRADVQAAKDDAARANQRLDNQAQA. K78 carries the N6-murein peptidoglycan lysine modification.

This sequence belongs to the Lpp family. As to quaternary structure, homotrimer.

It is found in the cell outer membrane. Its subcellular location is the secreted. The protein localises to the cell wall. Functionally, a highly abundant outer membrane lipoprotein that controls the distance between the inner and outer membranes. The only protein known to be covalently linked to the peptidoglycan network (PGN). Also non-covalently binds the PGN. The link between the cell outer membrane and PGN contributes to maintenance of the structural and functional integrity of the cell envelope, and maintains the correct distance between the PGN and the outer membrane. The chain is Major outer membrane lipoprotein Lpp from Yersinia pestis.